The sequence spans 42 residues: uncharacterized protein (42 aa).

The protein localises to the cytoplasm. This is an uncharacterized protein from Escherichia coli (strain K12).